We begin with the raw amino-acid sequence, 114 residues long: UPF0473 protein OEOE_1164 (114 aa).

This sequence belongs to the UPF0473 family.

The sequence is that of UPF0473 protein OEOE_1164 from Oenococcus oeni (strain ATCC BAA-331 / PSU-1).